The following is a 137-amino-acid chain: Phosphoribosyl-AMP cyclohydrolase (137 aa).

Asp84 lines the Mg(2+) pocket. Residue Cys85 coordinates Zn(2+). Residues Asp86 and Asp88 each contribute to the Mg(2+) site. Residues Cys101 and Cys108 each coordinate Zn(2+).

The protein belongs to the PRA-CH family. In terms of assembly, homodimer. Requires Mg(2+) as cofactor. Zn(2+) is required as a cofactor.

The protein resides in the cytoplasm. The catalysed reaction is 1-(5-phospho-beta-D-ribosyl)-5'-AMP + H2O = 1-(5-phospho-beta-D-ribosyl)-5-[(5-phospho-beta-D-ribosylamino)methylideneamino]imidazole-4-carboxamide. The protein operates within amino-acid biosynthesis; L-histidine biosynthesis; L-histidine from 5-phospho-alpha-D-ribose 1-diphosphate: step 3/9. Catalyzes the hydrolysis of the adenine ring of phosphoribosyl-AMP. This is Phosphoribosyl-AMP cyclohydrolase from Pelodictyon phaeoclathratiforme (strain DSM 5477 / BU-1).